The following is a 580-amino-acid chain: TRAF-type zinc finger domain-containing protein 1 (580 aa).

At A2 the chain carries N-acetylalanine. The TRAF-type zinc finger occupies 27–103 (IHEIHCQRNI…DLELSVLKLK (77 aa)). S190 carries the post-translational modification Phosphoserine. Residues 197-209 (TTNQRSMTAQFPI) show a composition bias toward polar residues. Residues 197 to 236 (TTNQRSMTAQFPIQNNLLEEQERQERNRSRQTPKERGEDS) form a disordered region. The span at 216-235 (EQERQERNRSRQTPKERGED) shows a compositional bias: basic and acidic residues. 3 positions are modified to phosphoserine: S326, S414, and S429. Residues 392–580 (PATANNHVSE…GAGDAEEEEE (189 aa)) are disordered. Basic and acidic residues predominate over residues 409-419 (QPRETSPELPK). Residues 453–463 (PPNNTTAPPNR) are compositionally biased toward low complexity. S469 carries the phosphoserine modification.

Interacts with MAVS, TICAM1, TRAF1, TRAF2, TRAF3 and TRAF6.

Negative feedback regulator that controls excessive innate immune responses. Regulates both Toll-like receptor 4 (TLR4) and DDX58/RIG1-like helicases (RLH) pathways. May inhibit the LTR pathway by direct interaction with TRAF6 and attenuation of NF-kappa-B activation. May negatively regulate the RLH pathway downstream from MAVS and upstream of NF-kappa-B and IRF3. In Bos taurus (Bovine), this protein is TRAF-type zinc finger domain-containing protein 1 (TRAFD1).